The following is a 312-amino-acid chain: Ribosomal RNA small subunit methyltransferase H (312 aa).

S-adenosyl-L-methionine is bound by residues G34 to H36, D54, L83, D99, and Q106.

Belongs to the methyltransferase superfamily. RsmH family.

It localises to the cytoplasm. It carries out the reaction cytidine(1402) in 16S rRNA + S-adenosyl-L-methionine = N(4)-methylcytidine(1402) in 16S rRNA + S-adenosyl-L-homocysteine + H(+). In terms of biological role, specifically methylates the N4 position of cytidine in position 1402 (C1402) of 16S rRNA. This Rubrobacter xylanophilus (strain DSM 9941 / JCM 11954 / NBRC 16129 / PRD-1) protein is Ribosomal RNA small subunit methyltransferase H.